The chain runs to 747 residues: Flowering time control protein FCA (747 aa).

The interval 80 to 101 is disordered; it reads YSVRPTTPPVQQPLSGQKRGYP. 2 RRM domains span residues 120 to 201 and 211 to 291; these read VKLF…YADG and FKLF…FAEP. Over residues 291 to 301 the composition is skewed to basic and acidic residues; the sequence is PKRPKPGESRE. Residues 291 to 503 are disordered; that stretch reads PKRPKPGESR…QQPLQKMQHP (213 aa). Polar residues-rich tracts occupy residues 320 to 353 and 395 to 406; these read RPTS…SNTG and SSSATLQQQNRA. A compositionally biased stretch (low complexity) spans 448-460; that stretch reads SSQLPTSQLPPQQ. Residues 461–498 are compositionally biased toward polar residues; sequence NISRATAPQTPLNINLRPTTVSSATVQFPPRSQQQPLQ. Positions 591–624 constitute a WW domain; sequence GSVKCTWTEHTSPDGFKYYYNGLTGESKWEKPEE. Residues 630-641 are compositionally biased toward basic and acidic residues; sequence REQQKQQQHQEK. Disordered stretches follow at residues 630-707 and 722-747; these read REQQ…SGIG and AASM…KNKA. A compositionally biased stretch (low complexity) spans 642-673; it reads PTIQQSQTQLQPLQQQPQQVQQQYQGQQLQQP. Composition is skewed to polar residues over residues 674 to 707 and 726 to 739; these read FYSS…SGIG and NDIS…QSPQ.

In terms of assembly, interacts (via C-terminus) with SWI3B and (via WW domain) with FY (via PPLPP motifs). Constitutively expressed, but the negative feedback maintains the active isoform a low level throughout much of the plant, except in meristematic cells at a specific time in development.

It localises to the nucleus. Plays a major role in the promotion of the transition of the vegetative meristem to reproductive development. Plays a role in the regulation of flowering time in the autonomous flowering pathway by decreasing FLOWERING LOCUS C mRNA levels. Required for RNA-mediated chromatin silencing of a range of loci in the genome. Cotranscriptionally recognizes aberrant RNA and marks it for silencing. Controls alternative cleavage and polyadenylation on pre-mRNAs and antisense RNAs. Acts redundantly with FPA to prevent the expression of distally polyadenylated antisense RNAs at the FLC locus. This is Flowering time control protein FCA (FCA) from Arabidopsis thaliana (Mouse-ear cress).